A 146-amino-acid polypeptide reads, in one-letter code: Hemoglobin subunit beta-2 (146 aa).

Position 1 is an N-acetylvaline (Val1). Residues 2-146 (HLHGDEKAAV…VASALAHKYH (145 aa)) form the Globin domain. Lys17 is modified (N6-succinyllysine). Ser44 carries the phosphoserine modification. An N6-succinyllysine modification is found at Lys59. Residues His63 and His92 each contribute to the heme b site. Arg104 carries the asymmetric dimethylarginine modification. A Phosphothreonine modification is found at Thr123.

It belongs to the globin family. In terms of assembly, heterotetramer of two alpha chains and two beta chains. Red blood cells.

In terms of biological role, involved in oxygen transport from the lung to the various peripheral tissues. In Tapirus terrestris (Lowland tapir), this protein is Hemoglobin subunit beta-2 (HBB2).